A 363-amino-acid polypeptide reads, in one-letter code: DNA replication and repair protein RecF (363 aa).

Residue 30 to 37 (GPNGSGKT) coordinates ATP.

This sequence belongs to the RecF family.

It is found in the cytoplasm. Its function is as follows. The RecF protein is involved in DNA metabolism; it is required for DNA replication and normal SOS inducibility. RecF binds preferentially to single-stranded, linear DNA. It also seems to bind ATP. This chain is DNA replication and repair protein RecF, found in Chlorobium phaeobacteroides (strain BS1).